We begin with the raw amino-acid sequence, 343 residues long: MSTALIDVDSMEPSLQSILDQKSLRWIFVGGKGGVGKTTTSCSLAIQLAKVRRSVLLISTDPAHNLSDAFSQKFGKEARLIDGFTNLSAMEIDPNGSMQDLLAGQGADEGGAAADGMAGMGGMMQDLAFAIPGIDEAMSFAEVLKQVKSLSYETIIFDTAPTGHTLRFLQFPSVLEKALAKVSQLSSQYGPLLNGFLGGQGQLPNGQSLPEMMEKLEQLRETISEVNTQFKDENLTTFVCVCIAEFLSLYETERMIQELASYNIDTHCIVVNQLLFPKKGSKCDHCDARRRMQKKYLDQIEELYDEFNVVKMPMLIEEVRGKEKLEKFSEMLVKPYVPPEADE.

32 to 39 serves as a coordination point for ATP; that stretch reads KGGVGKTT. Asp-61 is a catalytic residue. 2 residues coordinate ATP: Glu-245 and Asn-272. Residues Cys-283 and Cys-286 each contribute to the Zn(2+) site.

Belongs to the arsA ATPase family. As to quaternary structure, homodimer.

The protein resides in the cytoplasm. The protein localises to the endoplasmic reticulum. Its function is as follows. ATPase required for the post-translational delivery of tail-anchored (TA) proteins to the endoplasmic reticulum. Recognizes and selectively binds the transmembrane domain of TA proteins in the cytosol. This complex then targets to the endoplasmic reticulum by membrane-bound receptors, where the tail-anchored protein is released for insertion. This process is regulated by ATP binding and hydrolysis. ATP binding drives the homodimer towards the closed dimer state, facilitating recognition of newly synthesized TA membrane proteins. ATP hydrolysis is required for insertion. Subsequently, the homodimer reverts towards the open dimer state, lowering its affinity for the membrane-bound receptor, and returning it to the cytosol to initiate a new round of targeting. The chain is ATPase GET3 from Pyricularia oryzae (strain 70-15 / ATCC MYA-4617 / FGSC 8958) (Rice blast fungus).